Here is a 244-residue protein sequence, read N- to C-terminus: Leucyl/phenylalanyl-tRNA--protein transferase (244 aa).

Belongs to the L/F-transferase family.

The protein localises to the cytoplasm. It carries out the reaction N-terminal L-lysyl-[protein] + L-leucyl-tRNA(Leu) = N-terminal L-leucyl-L-lysyl-[protein] + tRNA(Leu) + H(+). The catalysed reaction is N-terminal L-arginyl-[protein] + L-leucyl-tRNA(Leu) = N-terminal L-leucyl-L-arginyl-[protein] + tRNA(Leu) + H(+). It catalyses the reaction L-phenylalanyl-tRNA(Phe) + an N-terminal L-alpha-aminoacyl-[protein] = an N-terminal L-phenylalanyl-L-alpha-aminoacyl-[protein] + tRNA(Phe). Its function is as follows. Functions in the N-end rule pathway of protein degradation where it conjugates Leu, Phe and, less efficiently, Met from aminoacyl-tRNAs to the N-termini of proteins containing an N-terminal arginine or lysine. This Thermodesulfovibrio yellowstonii (strain ATCC 51303 / DSM 11347 / YP87) protein is Leucyl/phenylalanyl-tRNA--protein transferase.